Consider the following 70-residue polypeptide: Large ribosomal subunit protein bL31 (70 aa).

4 residues coordinate Zn(2+): Cys16, Cys18, Cys36, and Cys39.

Belongs to the bacterial ribosomal protein bL31 family. Type A subfamily. In terms of assembly, part of the 50S ribosomal subunit. The cofactor is Zn(2+).

In terms of biological role, binds the 23S rRNA. This is Large ribosomal subunit protein bL31 from Fervidobacterium nodosum (strain ATCC 35602 / DSM 5306 / Rt17-B1).